A 394-amino-acid polypeptide reads, in one-letter code: MSKEKFERKKPHVNVGTIGHVDHGKTTLTAAITTVLAKTFGGNARAFDQIDNAPEEKARGITISTSHVEYDTPSRHYAHVDCPGHADYVKNMITGAAQMDGAILVVAATDGPMPQTREHILLGRQVGVPYIIVFLNKCDMVDDEELLELVEMEVRELLSQYDFPGDDTPVIRGSALKALEGDAEWEAKIIELAEALDSYIPEPERAIDQPFLLPIEDVFSISGRGTVVTGRVERGIVKVGEEVEIVGIKDTTKTTCTGVEMFRKLLDEGRAGENVGVLLRGTKRDEIERGQVLAKPGSIKPHTTFESEVYILSKDEGGRHTPFFKGYRPQFYFRTTDVTGTIELPEGVEMVMPGDNIQMKVTLIAPIAMDQGLRFAIREGGRTVGAGVVAKVIA.

Positions 10-204 (KPHVNVGTIG…ALDSYIPEPE (195 aa)) constitute a tr-type G domain. The segment at 19 to 26 (GHVDHGKT) is G1. 19 to 26 (GHVDHGKT) lines the GTP pocket. Thr-26 is a Mg(2+) binding site. Residues 60–64 (GITIS) form a G2 region. Residues 81–84 (DCPG) form a G3 region. GTP is bound by residues 81–85 (DCPGH) and 136–139 (NKCD). Residues 136-139 (NKCD) form a G4 region. Positions 174–176 (SAL) are G5.

It belongs to the TRAFAC class translation factor GTPase superfamily. Classic translation factor GTPase family. EF-Tu/EF-1A subfamily. In terms of assembly, monomer.

It localises to the cytoplasm. The enzyme catalyses GTP + H2O = GDP + phosphate + H(+). In terms of biological role, GTP hydrolase that promotes the GTP-dependent binding of aminoacyl-tRNA to the A-site of ribosomes during protein biosynthesis. In Photorhabdus laumondii subsp. laumondii (strain DSM 15139 / CIP 105565 / TT01) (Photorhabdus luminescens subsp. laumondii), this protein is Elongation factor Tu 1.